Reading from the N-terminus, the 166-residue chain is Transcriptional repressor NrdR (166 aa).

Residues 3–34 (CPFCHFVETDVIDTRKLYEGEVIRRRRRCRAC) fold into a zinc finger. The ATP-cone domain occupies 49–139 (LMVVKKDGTR…VYRAFTDIGK (91 aa)).

The protein belongs to the NrdR family. Zn(2+) is required as a cofactor.

Functionally, negatively regulates transcription of bacterial ribonucleotide reductase nrd genes and operons by binding to NrdR-boxes. The protein is Transcriptional repressor NrdR of Chloroflexus aurantiacus (strain ATCC 29364 / DSM 637 / Y-400-fl).